The following is a 187-amino-acid chain: UPF0301 protein Sbal195_3177 (187 aa).

This sequence belongs to the UPF0301 (AlgH) family.

The protein is UPF0301 protein Sbal195_3177 of Shewanella baltica (strain OS195).